The primary structure comprises 291 residues: Ribosomal RNA small subunit methyltransferase A (291 aa).

S-adenosyl-L-methionine-binding residues include His-21, Leu-23, Gly-48, Glu-70, Asp-95, and Asn-115.

It belongs to the class I-like SAM-binding methyltransferase superfamily. rRNA adenine N(6)-methyltransferase family. RsmA subfamily.

It localises to the cytoplasm. It catalyses the reaction adenosine(1518)/adenosine(1519) in 16S rRNA + 4 S-adenosyl-L-methionine = N(6)-dimethyladenosine(1518)/N(6)-dimethyladenosine(1519) in 16S rRNA + 4 S-adenosyl-L-homocysteine + 4 H(+). Its function is as follows. Specifically dimethylates two adjacent adenosines (A1518 and A1519) in the loop of a conserved hairpin near the 3'-end of 16S rRNA in the 30S particle. May play a critical role in biogenesis of 30S subunits. The sequence is that of Ribosomal RNA small subunit methyltransferase A from Prochlorococcus marinus (strain NATL1A).